A 148-amino-acid chain; its full sequence is Large ribosomal subunit protein bL9 (148 aa).

It belongs to the bacterial ribosomal protein bL9 family.

In terms of biological role, binds to the 23S rRNA. The polypeptide is Large ribosomal subunit protein bL9 (Oceanobacillus iheyensis (strain DSM 14371 / CIP 107618 / JCM 11309 / KCTC 3954 / HTE831)).